A 342-amino-acid polypeptide reads, in one-letter code: tRNA dimethylallyltransferase (342 aa).

Residues 1–30 (MSANGPAAEPADGGRAVPAGGGEAVPAGGG) are disordered. Positions 19 to 30 (AGGGEAVPAGGG) are enriched in gly residues. 49–56 (GPTAAGKS) serves as a coordination point for ATP. 51-56 (TAAGKS) serves as a coordination point for substrate. The segment at 74–77 (DSMQ) is interaction with substrate tRNA.

The protein belongs to the IPP transferase family. In terms of assembly, monomer. Mg(2+) is required as a cofactor.

The enzyme catalyses adenosine(37) in tRNA + dimethylallyl diphosphate = N(6)-dimethylallyladenosine(37) in tRNA + diphosphate. Functionally, catalyzes the transfer of a dimethylallyl group onto the adenine at position 37 in tRNAs that read codons beginning with uridine, leading to the formation of N6-(dimethylallyl)adenosine (i(6)A). This Salinispora arenicola (strain CNS-205) protein is tRNA dimethylallyltransferase.